The primary structure comprises 633 residues: Dynein axonemal assembly factor 1 (633 aa).

The tract at residues 1–80 (MHPEASEPPV…SRDDRDDRGP (80 aa)) is disordered. Basic and acidic residues predominate over residues 22 to 42 (AGDHGDAGPGVRKEEINETKE). Positions 46-60 (GPCTTSCQSQQQPSG) are enriched in low complexity. Positions 70-80 (HSRDDRDDRGP) are enriched in basic and acidic residues. LRR repeat units lie at residues 101–123 (ALND…EEYT), 124–145 (GLRC…QAQS), 146–167 (ELRC…EPLQ), 168–189 (KLDA…SCLP), 190–211 (VLNT…EHLR), and 215–236 (QLCV…SVLE). The LRRCT domain maps to 249–288 (NPVTKHIPNYRRTVTVRLKHLTYLDDRPVFPKDRACAEAW). Residues 326–344 (EERKKARDRGETPLPESEK) are compositionally biased toward basic and acidic residues. Disordered stretches follow at residues 326–364 (EERK…TQQK) and 404–436 (LSGN…RTED). S349 bears the Phosphoserine mark. A compositionally biased stretch (basic and acidic residues) spans 352-364 (AQEKPPKGETQQK). The segment covering 413-427 (TPVVVTPEEVTSPVE) has biased composition (low complexity). T462 is modified (phosphothreonine). Phosphoserine is present on residues S465 and S488. Polar residues-rich tracts occupy residues 538 to 555 (TTDL…SSHP) and 568 to 592 (GESN…SEGG). Residues 538-633 (TTDLETQSQD…GLEDIEFGLD (96 aa)) are disordered.

Belongs to the DNAAF1 family.

The protein resides in the cell projection. It localises to the cilium. Functionally, cilium-specific protein required for the stability of the ciliary architecture. Plays a role in cytoplasmic preassembly of dynein arms. Involved in regulation of microtubule-based cilia and actin-based brush border microvilli. The protein is Dynein axonemal assembly factor 1 (Dnaaf1) of Rattus norvegicus (Rat).